Consider the following 108-residue polypeptide: MMKGQLAGLMKQAQQMQENMKKMQEQLALIEVEGQSGAGLVKVTMTCRNEVRRVSIDPSLLADDKDMLEDLVAAAFNDAVRKAEVTSQEKMSGMTAGLPLPPGFKLPF.

Belongs to the YbaB/EbfC family. In terms of assembly, homodimer.

The protein resides in the cytoplasm. It is found in the nucleoid. Binds to DNA and alters its conformation. May be involved in regulation of gene expression, nucleoid organization and DNA protection. This is Nucleoid-associated protein BTH_I2220 from Burkholderia thailandensis (strain ATCC 700388 / DSM 13276 / CCUG 48851 / CIP 106301 / E264).